The primary structure comprises 404 residues: Deoxyguanosinetriphosphate triphosphohydrolase-like protein 1 (404 aa).

The HD domain maps to 75-219; the sequence is RLTHSIEVAQ…AAIADDIAYN (145 aa).

It belongs to the dGTPase family. Type 2 subfamily.

The chain is Deoxyguanosinetriphosphate triphosphohydrolase-like protein 1 from Mesorhizobium japonicum (strain LMG 29417 / CECT 9101 / MAFF 303099) (Mesorhizobium loti (strain MAFF 303099)).